The sequence spans 325 residues: NADH-quinone oxidoreductase subunit H (325 aa).

9 helical membrane passes run 11–31 (ILLS…CGAF), 50–69 (NRVG…KMFF), 81–101 (VIFT…FAIV), 114–134 (IGIL…LFAG), 154–174 (LSYE…AGSF), 186–206 (IWNV…GVAV), 237–257 (FFVG…TLFF), 265–285 (LPPF…FILI), and 304–324 (VCLP…LWQA).

This sequence belongs to the complex I subunit 1 family. NDH-1 is composed of 13 different subunits. Subunits NuoA, H, J, K, L, M, N constitute the membrane sector of the complex.

The protein resides in the cell inner membrane. The enzyme catalyses a quinone + NADH + 5 H(+)(in) = a quinol + NAD(+) + 4 H(+)(out). In terms of biological role, NDH-1 shuttles electrons from NADH, via FMN and iron-sulfur (Fe-S) centers, to quinones in the respiratory chain. The immediate electron acceptor for the enzyme in this species is believed to be ubiquinone. Couples the redox reaction to proton translocation (for every two electrons transferred, four hydrogen ions are translocated across the cytoplasmic membrane), and thus conserves the redox energy in a proton gradient. This subunit may bind ubiquinone. The sequence is that of NADH-quinone oxidoreductase subunit H from Citrobacter koseri (strain ATCC BAA-895 / CDC 4225-83 / SGSC4696).